We begin with the raw amino-acid sequence, 116 residues long: Ribosome-binding factor A (116 aa).

It belongs to the RbfA family. As to quaternary structure, monomer. Binds 30S ribosomal subunits, but not 50S ribosomal subunits or 70S ribosomes.

Its subcellular location is the cytoplasm. In terms of biological role, one of several proteins that assist in the late maturation steps of the functional core of the 30S ribosomal subunit. Associates with free 30S ribosomal subunits (but not with 30S subunits that are part of 70S ribosomes or polysomes). Required for efficient processing of 16S rRNA. May interact with the 5'-terminal helix region of 16S rRNA. The protein is Ribosome-binding factor A of Chlorobium phaeobacteroides (strain DSM 266 / SMG 266 / 2430).